The sequence spans 339 residues: DNA-directed RNA polymerase subunit alpha (339 aa).

Residues 1–235 (MVIQKNWQEL…DQLQVFVNFE (235 aa)) form an alpha N-terminal domain (alpha-NTD) region. Positions 251–339 (FNPALLKKVD…DLAKRFEEHY (89 aa)) are alpha C-terminal domain (alpha-CTD).

It belongs to the RNA polymerase alpha chain family. In terms of assembly, homodimer. The RNAP catalytic core consists of 2 alpha, 1 beta, 1 beta' and 1 omega subunit. When a sigma factor is associated with the core the holoenzyme is formed, which can initiate transcription.

It catalyses the reaction RNA(n) + a ribonucleoside 5'-triphosphate = RNA(n+1) + diphosphate. Functionally, DNA-dependent RNA polymerase catalyzes the transcription of DNA into RNA using the four ribonucleoside triphosphates as substrates. This chain is DNA-directed RNA polymerase subunit alpha, found in Methylorubrum populi (strain ATCC BAA-705 / NCIMB 13946 / BJ001) (Methylobacterium populi).